A 256-amino-acid chain; its full sequence is Fructose-1,6-bisphosphatase/inositol-1-monophosphatase (256 aa).

4 residues coordinate Mg(2+): Glu65, Asp79, Ile81, and Asp82. Residues 82–84, Arg172, Ala177, and Arg196 each bind substrate; that span reads DGT. Asp201 contributes to the Mg(2+) binding site.

The protein belongs to the inositol monophosphatase superfamily. FBPase class 4 family. Homotetramer. Mg(2+) is required as a cofactor.

The catalysed reaction is beta-D-fructose 1,6-bisphosphate + H2O = beta-D-fructose 6-phosphate + phosphate. It carries out the reaction a myo-inositol phosphate + H2O = myo-inositol + phosphate. In contrast to mammalian I-1-P phosphatases, is only weakly inhibited by Li(+), since 50% inhibitory concentration for Li(+) is about 100 mM, and the Li(+) concentration required to totally abolish I-1-Pase activity is 1 M. Phosphatase with broad specificity; it can dephosphorylate fructose 1,6-bisphosphate, both D and L isomers of inositol-1-phosphate (I-1-P) but displaying a 20-fold higher rate of hydrolysis of D-I-1-P than of the L isomer, 2'-AMP, pNPP, inositol-2-phosphate, beta-glycerol phosphate, and alpha-D-glucose-1-phosphate. Cannot hydrolyze glucose-6-phosphate, fructose-6-phosphate, 5'-AMP and NAD(+). May be involved in the biosynthesis of a unique osmolyte, di-myo-inositol 1,1-phosphate. This is Fructose-1,6-bisphosphatase/inositol-1-monophosphatase (suhB) from Thermotoga maritima (strain ATCC 43589 / DSM 3109 / JCM 10099 / NBRC 100826 / MSB8).